The sequence spans 109 residues: Protein FAM32A-like (109 aa).

Positions 1–48 are disordered; the sequence is MSEYKSVQKGSLKLKGVSLPSKKKKKKNKEMKRLEEQVLTSENEEGTK. Low complexity predominate over residues 9-20; the sequence is KGSLKLKGVSLP. Residues 21–30 show a composition bias toward basic residues; that stretch reads SKKKKKKNKE.

This sequence belongs to the FAM32 family.

It localises to the nucleus. Functionally, may induce G2 arrest and apoptosis. May also increase cell sensitivity to apoptotic stimuli. The protein is Protein FAM32A-like (fam32al) of Danio rerio (Zebrafish).